The chain runs to 455 residues: Protein indeterminate-domain 7 (455 aa).

Positions 1–52 (MMMNRDILFHQQQQQQMEENMSNLTSASGDQASVSSGNRTETSGSNINQHHQ) are disordered. Residues 17–49 (MEENMSNLTSASGDQASVSSGNRTETSGSNINQ) are compositionally biased toward polar residues. Residue Ser-82 is modified to Phosphoserine. 2 consecutive C2H2-type zinc fingers follow at residues 92–114 (FICE…KRGH) and 134–164 (YVCP…FRKH). Residues 156 to 163 (IKKHFFRK) carry the Nuclear localization signal motif. A C2H2-type 2; degenerate zinc finger spans residues 169–192 (WKCEKCSKKYAVQSDWKAHAKTCG). The Zn(2+) site is built by Cys-171, Cys-174, His-187, Cys-191, Cys-198, Cys-200, His-213, and Cys-217. A CCHC-type 2; atypical zinc finger spans residues 196-219 (YKCDCGTLFSRRDSFITHRAFCDA). Positions 206–218 (RRDSFITHRAFCD) are SHR-binding. The segment at 235-351 (QASNSPHHHH…PEEEERSSRS (117 aa)) is disordered. Low complexity-rich tracts occupy residues 248–265 (QQNI…SNSN) and 288–299 (SSNPNPNGNNGN).

It localises to the nucleus. Its function is as follows. Probable transcription factor. The polypeptide is Protein indeterminate-domain 7 (Arabidopsis thaliana (Mouse-ear cress)).